The primary structure comprises 152 residues: SsrA-binding protein (152 aa).

The interval 130-152 is disordered; the sequence is HDKRQDLKQRQDKREMERAMKQR. Residues 132 to 152 are compositionally biased toward basic and acidic residues; sequence KRQDLKQRQDKREMERAMKQR.

The protein belongs to the SmpB family.

It localises to the cytoplasm. In terms of biological role, required for rescue of stalled ribosomes mediated by trans-translation. Binds to transfer-messenger RNA (tmRNA), required for stable association of tmRNA with ribosomes. tmRNA and SmpB together mimic tRNA shape, replacing the anticodon stem-loop with SmpB. tmRNA is encoded by the ssrA gene; the 2 termini fold to resemble tRNA(Ala) and it encodes a 'tag peptide', a short internal open reading frame. During trans-translation Ala-aminoacylated tmRNA acts like a tRNA, entering the A-site of stalled ribosomes, displacing the stalled mRNA. The ribosome then switches to translate the ORF on the tmRNA; the nascent peptide is terminated with the 'tag peptide' encoded by the tmRNA and targeted for degradation. The ribosome is freed to recommence translation, which seems to be the essential function of trans-translation. The polypeptide is SsrA-binding protein (Thermosynechococcus vestitus (strain NIES-2133 / IAM M-273 / BP-1)).